The following is a 514-amino-acid chain: Histidine ammonia-lyase (514 aa).

Residues 143 to 145 (CSG) constitute a cross-link (5-imidazolinone (Cys-Gly)). A 2,3-didehydroalanine (Ser) modification is found at serine 144.

Belongs to the PAL/histidase family. In terms of processing, contains an active site 4-methylidene-imidazol-5-one (MIO), which is formed autocatalytically by cyclization and dehydration of residues Cys-Ser-Gly.

It is found in the cytoplasm. The catalysed reaction is L-histidine = trans-urocanate + NH4(+). The protein operates within amino-acid degradation; L-histidine degradation into L-glutamate; N-formimidoyl-L-glutamate from L-histidine: step 1/3. This Streptomyces griseus protein is Histidine ammonia-lyase (hutH).